The primary structure comprises 521 residues: D-aminoacyl-tRNA deacylase (521 aa).

Disordered regions lie at residues 323–353 and 499–521; these read AVGT…SEDS and VFST…SSSS. Positions 343 to 353 are enriched in basic and acidic residues; the sequence is VDAERTESEDS. Positions 501–521 are enriched in low complexity; it reads STSSSSSSSSSSSSSSSSSSS.

The protein belongs to the DtdA deacylase family. Monomer. The cofactor is Zn(2+).

The enzyme catalyses a D-aminoacyl-tRNA + H2O = a tRNA + a D-alpha-amino acid + H(+). It carries out the reaction glycyl-tRNA(Ala) + H2O = tRNA(Ala) + glycine + H(+). In terms of biological role, D-aminoacyl-tRNA deacylase with broad substrate specificity. By recycling D-aminoacyl-tRNA to D-amino acids and free tRNA molecules, this enzyme counteracts the toxicity associated with the formation of D-aminoacyl-tRNA entities in vivo. This chain is D-aminoacyl-tRNA deacylase, found in Haloquadratum walsbyi (strain DSM 16790 / HBSQ001).